The following is a 327-amino-acid chain: Pyruvate dehydrogenase E1 component subunit beta (327 aa).

Thiamine diphosphate is bound at residue Glu63.

As to quaternary structure, heterodimer of an alpha and a beta chain. It depends on thiamine diphosphate as a cofactor.

It catalyses the reaction N(6)-[(R)-lipoyl]-L-lysyl-[protein] + pyruvate + H(+) = N(6)-[(R)-S(8)-acetyldihydrolipoyl]-L-lysyl-[protein] + CO2. Functionally, the pyruvate dehydrogenase complex catalyzes the overall conversion of pyruvate to acetyl-CoA and CO(2). It contains multiple copies of three enzymatic components: pyruvate dehydrogenase (E1), dihydrolipoamide acetyltransferase (E2) and lipoamide dehydrogenase (E3). This is Pyruvate dehydrogenase E1 component subunit beta (pdhB) from Mycoplasma pneumoniae (strain ATCC 29342 / M129 / Subtype 1) (Mycoplasmoides pneumoniae).